The chain runs to 93 residues: Sec-independent protein translocase protein TatA (93 aa).

Residues 1–21 (MGIFDWKHWIVILVVVVLVFG) traverse the membrane as a helical segment. The tract at residues 43–93 (MNDDEKPAEPVVPPAAQPVPPVQPQQSAPLNQPHTIDVQAQKVEEPTRKDS) is disordered. Residues 52 to 65 (PVVPPAAQPVPPVQ) show a composition bias toward pro residues. The span at 84–93 (KVEEPTRKDS) shows a compositional bias: basic and acidic residues.

The protein belongs to the TatA/E family. As to quaternary structure, the Tat system comprises two distinct complexes: a TatABC complex, containing multiple copies of TatA, TatB and TatC subunits, and a separate TatA complex, containing only TatA subunits. Substrates initially bind to the TatABC complex, which probably triggers association of the separate TatA complex to form the active translocon.

The protein resides in the cell inner membrane. Its function is as follows. Part of the twin-arginine translocation (Tat) system that transports large folded proteins containing a characteristic twin-arginine motif in their signal peptide across membranes. TatA could form the protein-conducting channel of the Tat system. The polypeptide is Sec-independent protein translocase protein TatA (Pseudomonas fluorescens (strain ATCC BAA-477 / NRRL B-23932 / Pf-5)).